The following is a 505-amino-acid chain: Alpha-1-syntrophin (505 aa).

Disordered regions lie at residues 1–24 and 40–75; these read MASGRRAPRTGLLELRAGTGAGAG and LTVSPADGEPGPEPGAVREPEPAQINGAAEPGAAPP. 2 consecutive PH domains span residues 6 to 269 and 293 to 401; these read RAPR…AQIN and DIKQ…DGCH. Residues 9–18 show a composition bias toward low complexity; it reads RTGLLELRAG. In terms of domain architecture, PDZ spans 87 to 170; the sequence is RVTVRKADAG…EVVLEVKYMK (84 aa). S101, S184, S189, S193, and S200 each carry phosphoserine. The interval 183-212 is disordered; it reads TSVGWDSPPASPLQRQPSSPGPQTRNLSEA. Positions 195-209 are enriched in polar residues; it reads LQRQPSSPGPQTRNL. The 57-residue stretch at 449 to 505 folds into the SU domain; it reads PFEKLQMSSDDGASLLFLDFGGAEGEIQLDLHSCPKTMVFIIHSFLSAKVTRLGLLA. The interval 483-505 is calmodulin-binding; that stretch reads PKTMVFIIHSFLSAKVTRLGLLA.

The protein belongs to the syntrophin family. Monomer and homodimer. Interacts with the dystrophin related protein DTNA; SGCG of the dystrophin glycoprotein complex; NOS1; GRB2; GA; TGFA; MAPK12 and the sodium channel proteins SCN4A and SCN5A. Interacts with the dystrophin protein DMD in a calmodulin dependent manner and with related protein UTRN; SGCA of the dystrophin glycoprotein complex; F-actin; calmodulin and with the other members of the syntrophin family SNTB1 and SNTB2. Interacts with MYOC; regulates muscle hypertrophy. Interacts with DTNB. In terms of processing, phosphorylated by CaM-kinase II. Phosphorylation may inhibit the interaction with DMD. In terms of tissue distribution, highly expressed in skeletal and cardiac muscle and is also detected in brain.

Its subcellular location is the cell membrane. It is found in the sarcolemma. The protein localises to the cell junction. The protein resides in the cytoplasm. It localises to the cytoskeleton. Functionally, adapter protein that binds to and probably organizes the subcellular localization of a variety of membrane proteins. May link various receptors to the actin cytoskeleton and the extracellular matrix via dystrophin glycoprotein complex. Plays an important role in synapse formation and in the organization of UTRN and acetylcholine receptors at the neuromuscular synapse. Binds to phosphatidylinositol 4,5-bisphosphate. This is Alpha-1-syntrophin (SNTA1) from Oryctolagus cuniculus (Rabbit).